Here is a 141-residue protein sequence, read N- to C-terminus: Drosulfakinins (141 aa).

The signal sequence occupies residues 1–31 (MGLRRCTHFATLVMPLWALALFFLVVMQVPA). The propeptide occupies 32–73 (QTTSLQISKEDRRLQELESKMGAESEQPNANLVGPSISRFGD). The tract at residues 49–69 (ESKMGAESEQPNANLVGPSIS) is disordered. Phenylalanine 82 bears the Phenylalanine amide mark. Positions 86 to 111 (VPLISRPMIPIELDLLMDNDDERTKA) are excised as a propeptide. Tyrosine 117 bears the Sulfotyrosine mark. Phenylalanine 122 carries the post-translational modification Phenylalanine amide. Tyrosine 134 is modified (sulfotyrosine). Phenylalanine 139 is modified (phenylalanine amide).

It belongs to the gastrin/cholecystokinin family.

It is found in the secreted. Drosulfakinin-0 (DSK 0) plays diverse biological roles including regulating gut muscle contraction in adults but not in larvae. This chain is Drosulfakinins, found in Drosophila erecta (Fruit fly).